We begin with the raw amino-acid sequence, 595 residues long: Aspartate--tRNA ligase (595 aa).

Residue glutamate 176 participates in L-aspartate binding. The tract at residues 200-203 is aspartate; sequence QIFK. Residue arginine 222 participates in L-aspartate binding. ATP-binding positions include 222-224 and glutamine 231; that span reads RDE. Residue histidine 450 coordinates L-aspartate. Glutamate 484 is an ATP binding site. Arginine 491 contacts L-aspartate. 536-539 contributes to the ATP binding site; it reads GLDR.

The protein belongs to the class-II aminoacyl-tRNA synthetase family. Type 1 subfamily. Homodimer.

The protein localises to the cytoplasm. It carries out the reaction tRNA(Asp) + L-aspartate + ATP = L-aspartyl-tRNA(Asp) + AMP + diphosphate. Its function is as follows. Catalyzes the attachment of L-aspartate to tRNA(Asp) in a two-step reaction: L-aspartate is first activated by ATP to form Asp-AMP and then transferred to the acceptor end of tRNA(Asp). This Halalkalibacterium halodurans (strain ATCC BAA-125 / DSM 18197 / FERM 7344 / JCM 9153 / C-125) (Bacillus halodurans) protein is Aspartate--tRNA ligase.